The sequence spans 147 residues: uncharacterized protein (147 aa).

The Rhodanese domain occupies tyrosine 52–cysteine 145.

This is an uncharacterized protein from Buchnera aphidicola subsp. Baizongia pistaciae (strain Bp).